Here is a 505-residue protein sequence, read N- to C-terminus: ATP synthase subunit alpha, chloroplastic (505 aa).

Residue 172 to 179 (GDRQTGKT) participates in ATP binding.

It belongs to the ATPase alpha/beta chains family. In terms of assembly, F-type ATPases have 2 components, CF(1) - the catalytic core - and CF(0) - the membrane proton channel. CF(1) has five subunits: alpha(3), beta(3), gamma(1), delta(1), epsilon(1). CF(0) has four main subunits: a, b, b' and c.

The protein localises to the plastid. The protein resides in the chloroplast thylakoid membrane. It catalyses the reaction ATP + H2O + 4 H(+)(in) = ADP + phosphate + 5 H(+)(out). Its function is as follows. Produces ATP from ADP in the presence of a proton gradient across the membrane. The alpha chain is a regulatory subunit. In Antithamnion sp. (Red alga), this protein is ATP synthase subunit alpha, chloroplastic.